The following is an 84-amino-acid chain: Small ribosomal subunit protein uS17 (84 aa).

The protein belongs to the universal ribosomal protein uS17 family. In terms of assembly, part of the 30S ribosomal subunit.

One of the primary rRNA binding proteins, it binds specifically to the 5'-end of 16S ribosomal RNA. This chain is Small ribosomal subunit protein uS17, found in Aliivibrio fischeri (strain ATCC 700601 / ES114) (Vibrio fischeri).